The following is a 193-amino-acid chain: dTTP/UTP pyrophosphatase (193 aa).

The active-site Proton acceptor is the Asp75.

This sequence belongs to the Maf family. YhdE subfamily. Requires a divalent metal cation as cofactor.

It localises to the cytoplasm. It carries out the reaction dTTP + H2O = dTMP + diphosphate + H(+). The enzyme catalyses UTP + H2O = UMP + diphosphate + H(+). In terms of biological role, nucleoside triphosphate pyrophosphatase that hydrolyzes dTTP and UTP. May have a dual role in cell division arrest and in preventing the incorporation of modified nucleotides into cellular nucleic acids. This Koribacter versatilis (strain Ellin345) protein is dTTP/UTP pyrophosphatase.